The chain runs to 410 residues: NADH-quinone oxidoreductase subunit H (410 aa).

The next 9 helical transmembrane spans lie at 16 to 36 (LILA…LAAI), 84 to 104 (WIYL…FAVI), 124 to 144 (LPVA…GIVL), 165 to 185 (VISY…YAGT), 198 to 218 (VWFI…MVGE), 260 to 280 (VSAL…PISI), 288 to 308 (WWPL…FMWL), 320 to 340 (FMRL…AIVA), and 353 to 373 (WVTA…LLAW). Positions 384–410 (SHSPPAQSSDHGAFPVPPLPVKEPADA) are disordered.

This sequence belongs to the complex I subunit 1 family. NDH-1 is composed of 14 different subunits. Subunits NuoA, H, J, K, L, M, N constitute the membrane sector of the complex.

The protein resides in the cell membrane. It catalyses the reaction a quinone + NADH + 5 H(+)(in) = a quinol + NAD(+) + 4 H(+)(out). In terms of biological role, NDH-1 shuttles electrons from NADH, via FMN and iron-sulfur (Fe-S) centers, to quinones in the respiratory chain. The immediate electron acceptor for the enzyme in this species is believed to be menaquinone. Couples the redox reaction to proton translocation (for every two electrons transferred, four hydrogen ions are translocated across the cytoplasmic membrane), and thus conserves the redox energy in a proton gradient. The chain is NADH-quinone oxidoreductase subunit H from Mycolicibacterium gilvum (strain PYR-GCK) (Mycobacterium gilvum (strain PYR-GCK)).